We begin with the raw amino-acid sequence, 86 residues long: Toxin CSTX-20 (86 aa).

Expressed by the venom gland.

The protein resides in the secreted. This is Toxin CSTX-20 from Cupiennius salei (American wandering spider).